Consider the following 94-residue polypeptide: MKTLLLTLVVVTIMCLDLGYTTKCYKTGERIISETCPPGQDLCYMKTWCDVFCGSRGRVVELGCTATCPTVKPHEQITCCSTDNCNPHPKMKQR.

The signal sequence occupies residues M1 to T21. 5 disulfides stabilise this stretch: C24–C43, C36–C64, C49–C53, C68–C79, and C80–C85.

Belongs to the three-finger toxin family. Long-chain subfamily. Type II alpha-neurotoxin sub-subfamily. As to expression, expressed by the venom gland.

Its subcellular location is the secreted. Functionally, binds with high affinity to muscular (alpha-1/CHRNA1) and neuronal (alpha-7/CHRNA7) nicotinic acetylcholine receptor (nAChR) and inhibits acetylcholine from binding to the receptor, thereby impairing neuromuscular and neuronal transmission. This is Long neurotoxin LNTX8 from Ophiophagus hannah (King cobra).